A 430-amino-acid chain; its full sequence is Tyrosine--tRNA ligase (430 aa).

Residue tyrosine 32 coordinates L-tyrosine. Residues 37 to 46 (PTADSLHIGH) carry the 'HIGH' region motif. Tyrosine 172 and glutamine 176 together coordinate L-tyrosine. Positions 232–236 (KFGKT) match the 'KMSKS' region motif. Residue lysine 235 coordinates ATP. Residues 362 to 430 (ISLVDLLADA…KKSYYLIIVE (69 aa)) form the S4 RNA-binding domain.

This sequence belongs to the class-I aminoacyl-tRNA synthetase family. TyrS type 1 subfamily. As to quaternary structure, homodimer.

The protein resides in the cytoplasm. It carries out the reaction tRNA(Tyr) + L-tyrosine + ATP = L-tyrosyl-tRNA(Tyr) + AMP + diphosphate + H(+). Catalyzes the attachment of tyrosine to tRNA(Tyr) in a two-step reaction: tyrosine is first activated by ATP to form Tyr-AMP and then transferred to the acceptor end of tRNA(Tyr). The chain is Tyrosine--tRNA ligase from Porphyromonas gingivalis (strain ATCC 33277 / DSM 20709 / CIP 103683 / JCM 12257 / NCTC 11834 / 2561).